Consider the following 300-residue polypeptide: NAD kinase (300 aa).

The active-site Proton acceptor is the Asp75. NAD(+)-binding positions include 75 to 76 (DG), 149 to 150 (ND), Arg177, Asp179, 190 to 195 (TAYALS), Ala214, and Gln248.

It belongs to the NAD kinase family. A divalent metal cation serves as cofactor.

Its subcellular location is the cytoplasm. It carries out the reaction NAD(+) + ATP = ADP + NADP(+) + H(+). Involved in the regulation of the intracellular balance of NAD and NADP, and is a key enzyme in the biosynthesis of NADP. Catalyzes specifically the phosphorylation on 2'-hydroxyl of the adenosine moiety of NAD to yield NADP. In Burkholderia ambifaria (strain MC40-6), this protein is NAD kinase.